We begin with the raw amino-acid sequence, 75 residues long: U9-theraphotoxin-Cg1a (75 aa).

Residues 1–21 form the signal peptide; that stretch reads MKTLVLFIIFGLAALFLLSSA. A propeptide spanning residues 22 to 29 is cleaved from the precursor; sequence NELEETER. Intrachain disulfides connect cysteine 31–cysteine 46, cysteine 38–cysteine 51, and cysteine 45–cysteine 58.

The protein belongs to the neurotoxin 10 (Hwtx-1) family. 43 (Jztx-49) subfamily. Expressed by the venom gland.

It localises to the secreted. Its function is as follows. Probable ion channel inhibitor. The polypeptide is U9-theraphotoxin-Cg1a (Chilobrachys guangxiensis (Chinese earth tiger tarantula)).